The chain runs to 89 residues: Small ribosomal subunit protein uS15 (89 aa).

Positions 1 to 11 (MSIAAERKAEV) are enriched in basic and acidic residues. A disordered region spans residues 1–24 (MSIAAERKAEVIKTNATKAGDTGS).

Belongs to the universal ribosomal protein uS15 family. As to quaternary structure, part of the 30S ribosomal subunit. Forms a bridge to the 50S subunit in the 70S ribosome, contacting the 23S rRNA.

Its function is as follows. One of the primary rRNA binding proteins, it binds directly to 16S rRNA where it helps nucleate assembly of the platform of the 30S subunit by binding and bridging several RNA helices of the 16S rRNA. Forms an intersubunit bridge (bridge B4) with the 23S rRNA of the 50S subunit in the ribosome. This Bradyrhizobium diazoefficiens (strain JCM 10833 / BCRC 13528 / IAM 13628 / NBRC 14792 / USDA 110) protein is Small ribosomal subunit protein uS15.